A 472-amino-acid polypeptide reads, in one-letter code: uncharacterized protein (472 aa).

Helical transmembrane passes span 4–24, 27–47, 56–76, 99–119, 140–160, and 176–196; these read IIIL…FSVI, APIC…LPFF, AGFI…GKVV, ILAI…LFVV, LIPG…LPGT, and IYAA…AGML. Residues 209–229 form a disordered region; the sequence is GEGYGGFDSQNAPAPESIESA. Residues 220–229 are compositionally biased toward low complexity; the sequence is APAPESIESA. The next 5 membrane-spanning stretches (helical) occupy residues 240–260, 286–306, 323–343, 372–392, and 448–468; these read ALAF…TIYL, AAAI…TILF, IGGA…GGII, TALA…LSAM, and IFAI…IYSL.

It belongs to the CitM (TC 2.A.11) transporter family.

The protein localises to the cell membrane. This is an uncharacterized protein from Bacillus subtilis (strain 168).